The sequence spans 341 residues: HTH-type transcriptional repressor PurR (341 aa).

Positions 2 to 56 (ATIKDVAKRAGVSTTTVSHVINKTRFVAEETKAAVRAAIKELHYSPSAVARSLKV) constitute an HTH lacI-type domain. Residues 4-23 (IKDVAKRAGVSTTTVSHVIN) constitute a DNA-binding region (H-T-H motif). The DNA-binding element occupies 48–56 (SAVARSLKV). 5 residues coordinate hypoxanthine: tyrosine 73, arginine 190, threonine 192, phenylalanine 221, and aspartate 275.

As to quaternary structure, homodimer.

It participates in purine metabolism; purine nucleotide biosynthesis [regulation]. In terms of biological role, is the main repressor of the genes involved in the de novo synthesis of purine nucleotides, regulating purB, purC, purEK, purF, purHD, purL, purMN and guaBA expression. PurR is allosterically activated to bind its cognate DNA by binding the purine corepressors, hypoxanthine or guanine, thereby effecting transcription repression. In Pectobacterium carotovorum subsp. carotovorum (strain PC1), this protein is HTH-type transcriptional repressor PurR.